The chain runs to 68 residues: Protein transport protein Sec61 subunit gamma (68 aa).

At 1–32 (MDQVMQFVEPSRQFVKDSIRLVKRCTKPDRKE) the chain is on the cytoplasmic side. A helical transmembrane segment spans residues 33 to 61 (FQKIAMATAIGFAIMGFIGFFVKLIHIPI). The Extracellular segment spans residues 62–68 (NNIIVGS).

It belongs to the SecE/SEC61-gamma family. The SEC61 channel-forming translocon complex consists of channel-forming core components SEC61A1, SEC61B and SEC61G and different auxiliary components such as SEC62 and SEC63. The SEC61 channel associates with the multi-pass translocon (MPT) complex.

The protein resides in the endoplasmic reticulum membrane. In terms of biological role, component of SEC61 channel-forming translocon complex that mediates transport of signal peptide-containing precursor polypeptides across the endoplasmic reticulum (ER). Forms a ribosome receptor and a gated pore in the ER membrane, both functions required for cotranslational translocation of nascent polypeptides. The SEC61 channel is also involved in ER membrane insertion of transmembrane proteins: it mediates membrane insertion of the first few transmembrane segments of proteins, while insertion of subsequent transmembrane regions of multi-pass membrane proteins is mediated by the multi-pass translocon (MPT) complex. The chain is Protein transport protein Sec61 subunit gamma (sec61g) from Xenopus laevis (African clawed frog).